A 103-amino-acid polypeptide reads, in one-letter code: Flagellar hook-basal body complex protein FliE (103 aa).

It belongs to the FliE family.

The protein localises to the bacterial flagellum basal body. The chain is Flagellar hook-basal body complex protein FliE from Erwinia tasmaniensis (strain DSM 17950 / CFBP 7177 / CIP 109463 / NCPPB 4357 / Et1/99).